A 284-amino-acid polypeptide reads, in one-letter code: Probable palmitoyltransferase ZDHHC24 (284 aa).

Residues 1–18 (MGEPWAARGTEGAPARMP) are Cytoplasmic-facing. The chain crosses the membrane as a helical span at residues 19 to 39 (VVFTALWAAVVVLELTYVMVL). The Extracellular portion of the chain corresponds to 40–52 (GPGPPPLEPLARA). A helical membrane pass occupies residues 53-73 (LQLALAAYQLLNLLGNMGLFL). Residues 74–137 (RSDPSIRGVM…GRCVGFHNYR (64 aa)) are Cytoplasmic-facing. Residues 94–144 (AYCYQCQSQVPPRSGHCSACRVCILRRDHHCRLLGRCVGFHNYRPFLCLLL) enclose the DHHC domain. The S-palmitoyl cysteine intermediate role is filled by cysteine 124. A helical membrane pass occupies residues 138–158 (PFLCLLLHAAGVLLHISVLLS). The Extracellular segment spans residues 159-166 (PALSALLQ). The helical transmembrane segment at 167-187 (AHSALYTVALLLLPWLMLLTG) threads the bilayer. The Cytoplasmic segment spans residues 188 to 195 (KVSLAQFA). Residues 196 to 216 (LAFVVDTCVAGALLCGAGLLF) form a helical membrane-spanning segment. The Extracellular segment spans residues 217–284 (HGMLLLRGQT…TPTDVGLVTS (68 aa)).

This sequence belongs to the DHHC palmitoyltransferase family.

It is found in the membrane. It catalyses the reaction L-cysteinyl-[protein] + hexadecanoyl-CoA = S-hexadecanoyl-L-cysteinyl-[protein] + CoA. In terms of biological role, probable palmitoyltransferase that could catalyze the addition of palmitate onto various protein substrates. In Rattus norvegicus (Rat), this protein is Probable palmitoyltransferase ZDHHC24 (Zdhhc24).